Here is a 136-residue protein sequence, read N- to C-terminus: WADLNTNNLDDPGAFYGVTSVYESNENMTITCSTKVCSFGKQVVEKVETEYARNEGGRFVYRIQRSPMCEYMVNFIHKLKHLPEKYMMNSVLENFTILQVVSNRDTQETLLCAAFVFEVSNSEHGAQHHIYRLVKT.

It is found in the nucleus. Functionally, probable transcription factor that function in the regulation of cell-specific gene expression during drosophila development, particularly in the differentiation of the nervous system. The protein is Protein scalloped (SD) of Junonia coenia (Peacock butterfly).